Here is a 254-residue protein sequence, read N- to C-terminus: Triosephosphate isomerase (254 aa).

Position 12–14 (12–14 (NWK)) interacts with substrate. His99 serves as the catalytic Electrophile. Residue Glu169 is the Proton acceptor of the active site. Substrate-binding positions include Gly175, Ser214, and 235–236 (GG).

Belongs to the triosephosphate isomerase family. Homodimer.

Its subcellular location is the cytoplasm. The enzyme catalyses D-glyceraldehyde 3-phosphate = dihydroxyacetone phosphate. It participates in carbohydrate biosynthesis; gluconeogenesis. It functions in the pathway carbohydrate degradation; glycolysis; D-glyceraldehyde 3-phosphate from glycerone phosphate: step 1/1. In terms of biological role, involved in the gluconeogenesis. Catalyzes stereospecifically the conversion of dihydroxyacetone phosphate (DHAP) to D-glyceraldehyde-3-phosphate (G3P). The sequence is that of Triosephosphate isomerase from Bartonella quintana (strain Toulouse) (Rochalimaea quintana).